A 500-amino-acid polypeptide reads, in one-letter code: NAD(P)H-quinone oxidoreductase chain 4, chloroplastic (500 aa).

Helical transmembrane passes span 4–24 (FPWLTIIIVLPIFAGFLILFL), 37–57 (LCICIIELLLTTYAFGYHFQL), 84–104 (GISIGPILLTGFITTLATLAA), 111–129 (SRVFHFLMLAMYSGQIGPF), 134–154 (LLLFFIMWELELIPVYLLLSM), 167–187 (FILYTAGSSAFLLVGILGICL), 208–228 (ALEMLFYIGFFIAFAVKSPII), 242–262 (HYSTCMLLAGILLKMGAYGLV), 272–292 (AHSIFSPWLMIVGTIQIIYAA), 305–325 (IAYSSVSHMGFIIIGLGSIND), 330–350 (GAILQIISHGFIGAALFFLAG), 386–406 (LALPGMSGFVAELILFFGILT), 416–436 (ILITFVMAIGMILTPIYSLSM), and 462–482 (FFVSISILLPVIAIGIYPDFV).

This sequence belongs to the complex I subunit 4 family.

The protein resides in the plastid. It localises to the chloroplast thylakoid membrane. The catalysed reaction is a plastoquinone + NADH + (n+1) H(+)(in) = a plastoquinol + NAD(+) + n H(+)(out). The enzyme catalyses a plastoquinone + NADPH + (n+1) H(+)(in) = a plastoquinol + NADP(+) + n H(+)(out). In Morus indica (Mulberry), this protein is NAD(P)H-quinone oxidoreductase chain 4, chloroplastic.